A 210-amino-acid polypeptide reads, in one-letter code: Thiamine-phosphate synthase (210 aa).

Residues 39 to 43 (QLREK) and asparagine 71 contribute to the 4-amino-2-methyl-5-(diphosphooxymethyl)pyrimidine site. 2 residues coordinate Mg(2+): aspartate 72 and aspartate 91. Serine 110 lines the 4-amino-2-methyl-5-(diphosphooxymethyl)pyrimidine pocket. 134–136 (TPT) lines the 2-[(2R,5Z)-2-carboxy-4-methylthiazol-5(2H)-ylidene]ethyl phosphate pocket. Position 137 (lysine 137) interacts with 4-amino-2-methyl-5-(diphosphooxymethyl)pyrimidine. Glycine 163 is a 2-[(2R,5Z)-2-carboxy-4-methylthiazol-5(2H)-ylidene]ethyl phosphate binding site.

The protein belongs to the thiamine-phosphate synthase family. The cofactor is Mg(2+).

The catalysed reaction is 2-[(2R,5Z)-2-carboxy-4-methylthiazol-5(2H)-ylidene]ethyl phosphate + 4-amino-2-methyl-5-(diphosphooxymethyl)pyrimidine + 2 H(+) = thiamine phosphate + CO2 + diphosphate. It catalyses the reaction 2-(2-carboxy-4-methylthiazol-5-yl)ethyl phosphate + 4-amino-2-methyl-5-(diphosphooxymethyl)pyrimidine + 2 H(+) = thiamine phosphate + CO2 + diphosphate. It carries out the reaction 4-methyl-5-(2-phosphooxyethyl)-thiazole + 4-amino-2-methyl-5-(diphosphooxymethyl)pyrimidine + H(+) = thiamine phosphate + diphosphate. It functions in the pathway cofactor biosynthesis; thiamine diphosphate biosynthesis; thiamine phosphate from 4-amino-2-methyl-5-diphosphomethylpyrimidine and 4-methyl-5-(2-phosphoethyl)-thiazole: step 1/1. Functionally, condenses 4-methyl-5-(beta-hydroxyethyl)thiazole monophosphate (THZ-P) and 2-methyl-4-amino-5-hydroxymethyl pyrimidine pyrophosphate (HMP-PP) to form thiamine monophosphate (TMP). The polypeptide is Thiamine-phosphate synthase (Campylobacter jejuni subsp. jejuni serotype O:2 (strain ATCC 700819 / NCTC 11168)).